Consider the following 261-residue polypeptide: tRNA pseudouridine synthase A (261 aa).

Aspartate 51 (nucleophile) is an active-site residue. Residue tyrosine 109 participates in substrate binding.

Belongs to the tRNA pseudouridine synthase TruA family. In terms of assembly, homodimer.

The catalysed reaction is uridine(38/39/40) in tRNA = pseudouridine(38/39/40) in tRNA. Formation of pseudouridine at positions 38, 39 and 40 in the anticodon stem and loop of transfer RNAs. This chain is tRNA pseudouridine synthase A, found in Tolumonas auensis (strain DSM 9187 / NBRC 110442 / TA 4).